The primary structure comprises 421 residues: Gamma-glutamyl phosphate reductase (421 aa).

Belongs to the gamma-glutamyl phosphate reductase family.

The protein resides in the cytoplasm. It catalyses the reaction L-glutamate 5-semialdehyde + phosphate + NADP(+) = L-glutamyl 5-phosphate + NADPH + H(+). The protein operates within amino-acid biosynthesis; L-proline biosynthesis; L-glutamate 5-semialdehyde from L-glutamate: step 2/2. In terms of biological role, catalyzes the NADPH-dependent reduction of L-glutamate 5-phosphate into L-glutamate 5-semialdehyde and phosphate. The product spontaneously undergoes cyclization to form 1-pyrroline-5-carboxylate. This chain is Gamma-glutamyl phosphate reductase, found in Pseudomonas aeruginosa (strain LESB58).